We begin with the raw amino-acid sequence, 189 residues long: Phosphoheptose isomerase (189 aa).

Positions 34 to 189 (VADTLKNGKK…CQAVDEAFRG (156 aa)) constitute an SIS domain. 49–51 (NGG) is a substrate binding site. Residues His58 and Glu62 each coordinate Zn(2+). Substrate-binding positions include Glu62, 91–92 (ND), 117–119 (STS), Ser122, and Gln169. Residues Gln169 and His177 each coordinate Zn(2+).

This sequence belongs to the SIS family. GmhA subfamily. Homotetramer. It depends on Zn(2+) as a cofactor.

It is found in the cytoplasm. The catalysed reaction is 2 D-sedoheptulose 7-phosphate = D-glycero-alpha-D-manno-heptose 7-phosphate + D-glycero-beta-D-manno-heptose 7-phosphate. It functions in the pathway carbohydrate biosynthesis; D-glycero-D-manno-heptose 7-phosphate biosynthesis; D-glycero-alpha-D-manno-heptose 7-phosphate and D-glycero-beta-D-manno-heptose 7-phosphate from sedoheptulose 7-phosphate: step 1/1. Its function is as follows. Catalyzes the isomerization of sedoheptulose 7-phosphate in D-glycero-D-manno-heptose 7-phosphate. This chain is Phosphoheptose isomerase, found in Campylobacter concisus (strain 13826).